The following is a 187-amino-acid chain: Peptide methionine sulfoxide reductase A2-1 (187 aa).

Belongs to the MsrA Met sulfoxide reductase family.

Its subcellular location is the cytoplasm. It is found in the cytosol. The enzyme catalyses L-methionyl-[protein] + [thioredoxin]-disulfide + H2O = L-methionyl-(S)-S-oxide-[protein] + [thioredoxin]-dithiol. It catalyses the reaction [thioredoxin]-disulfide + L-methionine + H2O = L-methionine (S)-S-oxide + [thioredoxin]-dithiol. Functionally, catalyzes the reduction of methionine sulfoxide (MetSO) to methionine in proteins. Plays a protective role against oxidative stress by restoring activity to proteins that have been inactivated by methionine oxidation. MSRA family specifically reduces the MetSO S-enantiomer. The protein is Peptide methionine sulfoxide reductase A2-1 (MSRA2-1) of Oryza sativa subsp. japonica (Rice).